The chain runs to 344 residues: MINEDSIQLDTLLKKYYEHSIEKIVFADDNGKIIAMNDAAKDILSEEDNYSAVANAICHRCEGYTNAYDVQSCKDCFLESMQVQATNFQVFMKTKDQKVMPFTATYQLIDQDRGIHAFTLQNVSSQIEQQEKLHQQRMMRKTISAQENERKRISRELHDSVIQEMLNVDVQLRLLKYQEDTTKLLEDAENIEYIVAKLIDDIRNMSVELRPASLDDLGLEAAFKSYFKQFEENYGIKIIYTSNIKNTRFDSDIETVVYRVVQEAILNALKYADVNEINVGIRQTGRHLVAEVIDAGNGFDPSSKPKGSGLGLYGMNERAELVSGSVNIETKIGEGTNVTLNIPI.

Positions 58, 61, 73, and 76 each coordinate [4Fe-4S] cluster. The Histidine kinase domain occupies 152-344; it reads RISRELHDSV…GTNVTLNIPI (193 aa). H158 carries the post-translational modification Phosphohistidine; by autocatalysis.

The cofactor is [4Fe-4S] cluster. In terms of processing, autophosphorylated.

Its subcellular location is the cytoplasm. It carries out the reaction ATP + protein L-histidine = ADP + protein N-phospho-L-histidine.. Member of the two-component regulatory system NreB/NreC involved in the control of dissimilatory nitrate/nitrite reduction in response to oxygen. NreB functions as a direct oxygen sensor histidine kinase which is autophosphorylated, in the absence of oxygen, probably at the conserved histidine residue, and transfers its phosphate group probably to a conserved aspartate residue of NreC. NreB/NreC activates the expression of the nitrate (narGHJI) and nitrite (nir) reductase operons, as well as the putative nitrate transporter gene narT. The protein is Oxygen sensor histidine kinase NreB (nreB) of Staphylococcus aureus (strain JH1).